The following is a 1209-amino-acid chain: ATP-dependent helicase/nuclease subunit A (1209 aa).

Residues 9–482 (SQWTDEQWQA…IDLAKNFRSR (474 aa)) enclose the UvrD-like helicase ATP-binding domain. 30-37 (AAAGSGKT) is a binding site for ATP. The 289-residue stretch at 510–798 (AALRFGAQDY…RMMTIHKSKG (289 aa)) folds into the UvrD-like helicase C-terminal domain.

It belongs to the helicase family. AddA subfamily. As to quaternary structure, heterodimer of AddA and AddB/RexB. It depends on Mg(2+) as a cofactor.

The enzyme catalyses Couples ATP hydrolysis with the unwinding of duplex DNA by translocating in the 3'-5' direction.. It catalyses the reaction ATP + H2O = ADP + phosphate + H(+). Its function is as follows. The heterodimer acts as both an ATP-dependent DNA helicase and an ATP-dependent, dual-direction single-stranded exonuclease. Recognizes the chi site generating a DNA molecule suitable for the initiation of homologous recombination. The AddA nuclease domain is required for chi fragment generation; this subunit has the helicase and 3' -&gt; 5' nuclease activities. The protein is ATP-dependent helicase/nuclease subunit A of Anoxybacillus flavithermus (strain DSM 21510 / WK1).